Reading from the N-terminus, the 460-residue chain is Methylenetetrahydrofolate--tRNA-(uracil-5-)-methyltransferase TrmFO (460 aa).

Residue 15–20 (GAGLAG) coordinates FAD.

It belongs to the MnmG family. TrmFO subfamily. Requires FAD as cofactor.

It localises to the cytoplasm. It carries out the reaction uridine(54) in tRNA + (6R)-5,10-methylene-5,6,7,8-tetrahydrofolate + NADH + H(+) = 5-methyluridine(54) in tRNA + (6S)-5,6,7,8-tetrahydrofolate + NAD(+). It catalyses the reaction uridine(54) in tRNA + (6R)-5,10-methylene-5,6,7,8-tetrahydrofolate + NADPH + H(+) = 5-methyluridine(54) in tRNA + (6S)-5,6,7,8-tetrahydrofolate + NADP(+). Functionally, catalyzes the folate-dependent formation of 5-methyl-uridine at position 54 (M-5-U54) in all tRNAs. The sequence is that of Methylenetetrahydrofolate--tRNA-(uracil-5-)-methyltransferase TrmFO from Synechococcus sp. (strain CC9902).